We begin with the raw amino-acid sequence, 515 residues long: Organic cation/carnitine transporter 5 (515 aa).

The Cytoplasmic portion of the chain corresponds to 1–43 (MADSLAPLLPTHIEEDEDTSSPLTFDKILEKSLSDFGFSQFLQ). A helical membrane pass occupies residues 44-64 (IVLVGLALTFDSQQIFITVFT). Over 65–124 (DAYPTWHCLDHTICNPATTDICKIPRSAWDWDGGFKGKSVISEFDLECSSSFLRSLPSST) the chain is Extracellular. Residues 125-145 (FYVGSIVGGVVLAMIPDGSLG) traverse the membrane as a helical segment. The Cytoplasmic segment spans residues 146–149 (RKQL). Residues 150–172 (LFFSSFAMSLTGISIFLSSNIWI) form a helical membrane-spanning segment. Residues 173-177 (YSFLK) are Extracellular-facing. The chain crosses the membrane as a helical span at residues 178–195 (FVIGFARSQTGTYALVLI). Position 195-202 (195-202 (ISERISTK)) interacts with ATP. The Cytoplasmic portion of the chain corresponds to 196–208 (SERISTKWRPRAT). The helical transmembrane segment at 209–229 (MVPFTLFVLGFMSLSGIAYLV) threads the bilayer. Topologically, residues 230–235 (RHASWK) are extracellular. Residues 236-256 (VLYLCTSIPAGIHSIFIYFFA) traverse the membrane as a helical segment. The Cytoplasmic portion of the chain corresponds to 257 to 320 (LESPRWLHLE…LFIIKWAFRR (64 aa)). Residues 321-341 (VTLVMIIMFGLGMSYYGVPLA) traverse the membrane as a helical segment. Residues 342 to 350 (VRDIKVNIY) are Extracellular-facing. A helical transmembrane segment spans residues 351–371 (MSEALNAMVELPTFVVTPILL). Over 372–379 (EQFSRRSS) the chain is Cytoplasmic. The chain crosses the membrane as a helical span at residues 380–400 (VLVNCLIGGASGVLCFVMSLY). Over 401–411 (GRTKIAFALEL) the chain is Extracellular. The chain crosses the membrane as a helical span at residues 412–432 (GSFFCARIGFNLMAIYLVELF). Residues 433–441 (PTCVRNSAT) are Cytoplasmic-facing. The chain crosses the membrane as a helical span at residues 442-462 (MMLRQALVVGGACCPLIASLG). At 463 to 467 (RNVPS) the chain is on the extracellular side. Residues 468–488 (LSFAVFGFAMSGLGLFALLLP) form a helical membrane-spanning segment. Residues 489 to 515 (ETKGLSLCDTMEEQEQRDQALKTSHSC) lie on the Cytoplasmic side of the membrane.

The protein belongs to the major facilitator (TC 2.A.1) superfamily. Organic cation transporter (TC 2.A.1.19) family. In terms of tissue distribution, mostly expressed in leaves and siliques, and, to a lower extent, in roots, stems and flowers.

It is found in the vacuole membrane. High affinity carnitine transporter involved in the active cellular uptake of carnitine. Also transports organic cations. The polypeptide is Organic cation/carnitine transporter 5 (OCT5) (Arabidopsis thaliana (Mouse-ear cress)).